Reading from the N-terminus, the 63-residue chain is Large ribosomal subunit protein uL29 (63 aa).

This sequence belongs to the universal ribosomal protein uL29 family.

The sequence is that of Large ribosomal subunit protein uL29 from Shewanella pealeana (strain ATCC 700345 / ANG-SQ1).